We begin with the raw amino-acid sequence, 364 residues long: MEENKIRIGITQGDINGVGYEVILKTFSDPTMLELCTPIIYGSPKVAAYHRKALDVQANFSIVNTASEAGYNRLSVVNCTDDEVKVEFSKPDPEAGKAALGALERAIEEYREGLIDVIVTAPINKHTIQSEEFSFPGHTEYIEERLGNGNKSLMILMKNDFRVALVTTHIPVREIATTITKELIQEKLMIFHRCLKQDFGIGAPRIAVLSLNPHAGDGGLLGMEEQEIIIPAMKEMEEKGIICYGPYAADGFMGSGNYTHFDGILAMYHDQGLAPFKALAMEDGVNYTAGLPVVRTSPAHGTAYDIAGKGLASEDSFRQAIYVAIDVFRNRQREKAARVNPLRKQYYEKRDDSDKLKLDTVDED.

H138 and T139 together coordinate substrate. Residues H169, H214, and H269 each contribute to the a divalent metal cation site. Substrate contacts are provided by K277, N286, and R295.

Belongs to the PdxA family. In terms of assembly, homodimer. A divalent metal cation serves as cofactor.

The protein localises to the cytoplasm. The enzyme catalyses 4-(phosphooxy)-L-threonine + NAD(+) = 3-amino-2-oxopropyl phosphate + CO2 + NADH. The protein operates within cofactor biosynthesis; pyridoxine 5'-phosphate biosynthesis; pyridoxine 5'-phosphate from D-erythrose 4-phosphate: step 4/5. Catalyzes the NAD(P)-dependent oxidation of 4-(phosphooxy)-L-threonine (HTP) into 2-amino-3-oxo-4-(phosphooxy)butyric acid which spontaneously decarboxylates to form 3-amino-2-oxopropyl phosphate (AHAP). The sequence is that of 4-hydroxythreonine-4-phosphate dehydrogenase from Bacteroides thetaiotaomicron (strain ATCC 29148 / DSM 2079 / JCM 5827 / CCUG 10774 / NCTC 10582 / VPI-5482 / E50).